Reading from the N-terminus, the 196-residue chain is MRRLIVLFAAALAVLGATAPALAAPKTETAVFAGGCFWCMEHDMQGVPGVLKVESGYTGGHLKNPTYRDVTSETSGHYEAVRVTYDPAKLDYGFLLYRYWRLVDPTDDGGQFCDRGPSYRPAVFVTPAQRPIAEKSRTEAAKRLKTGTMKTQILPAQTFYLAEEYHRDYAKRNKLNYFAYRTGCGRDARLKQVWGG.

The active site involves Cys-36.

The protein belongs to the MsrA Met sulfoxide reductase family.

It carries out the reaction L-methionyl-[protein] + [thioredoxin]-disulfide + H2O = L-methionyl-(S)-S-oxide-[protein] + [thioredoxin]-dithiol. It catalyses the reaction [thioredoxin]-disulfide + L-methionine + H2O = L-methionine (S)-S-oxide + [thioredoxin]-dithiol. In terms of biological role, has an important function as a repair enzyme for proteins that have been inactivated by oxidation. Catalyzes the reversible oxidation-reduction of methionine sulfoxide in proteins to methionine. The chain is Peptide methionine sulfoxide reductase MsrA 2 (msrA2) from Caulobacter vibrioides (strain ATCC 19089 / CIP 103742 / CB 15) (Caulobacter crescentus).